A 390-amino-acid chain; its full sequence is D-alanyl-D-alanine carboxypeptidase DacD (390 aa).

An N-terminal signal peptide occupies residues 1 to 23; the sequence is MLLKRRLFIAASLFAMHLSPALA. Catalysis depends on Ser65, which acts as the Acyl-ester intermediate. The active-site Proton acceptor is Lys68. Ser131 is a catalytic residue. Substrate is bound at residue Lys234.

The protein belongs to the peptidase S11 family.

Its subcellular location is the cell inner membrane. It carries out the reaction Preferential cleavage: (Ac)2-L-Lys-D-Ala-|-D-Ala. Also transpeptidation of peptidyl-alanyl moieties that are N-acyl substituents of D-alanine.. The protein operates within cell wall biogenesis; peptidoglycan biosynthesis. In terms of biological role, removes C-terminal D-alanyl residues from sugar-peptide cell wall precursors. This chain is D-alanyl-D-alanine carboxypeptidase DacD (dacD), found in Salmonella typhimurium (strain LT2 / SGSC1412 / ATCC 700720).